A 1020-amino-acid polypeptide reads, in one-letter code: DNA-directed RNA polymerase 2, chloroplastic/mitochondrial (1020 aa).

A disordered region spans residues 314–336 (KKQKAEKDKQKEDGEHVTQEQEK). Residues D721, K796, and D953 contribute to the active site.

Belongs to the phage and mitochondrial RNA polymerase family. In terms of tissue distribution, the highest levels of expression are detected in the mature leaves. The level of expression is lowest in the cotyledons.

Its subcellular location is the plastid. It is found in the chloroplast. It localises to the mitochondrion. The catalysed reaction is RNA(n) + a ribonucleoside 5'-triphosphate = RNA(n+1) + diphosphate. In terms of biological role, DNA-dependent RNA polymerase catalyzes the transcription of DNA into RNA using the four ribonucleoside triphosphates as substrates. The sequence is that of DNA-directed RNA polymerase 2, chloroplastic/mitochondrial (RPOT2) from Nicotiana sylvestris (Wood tobacco).